The following is a 988-amino-acid chain: Voltage-gated delayed rectifier potassium channel KCNH5 (988 aa).

The Cytoplasmic portion of the chain corresponds to 1 to 217 (MPGGKRGLVA…LHYCAFKTTW (217 aa)). In terms of domain architecture, PAS spans 12–90 (QNTFLENIVR…VRQTFDNYES (79 aa)). In terms of domain architecture, PAC spans 91-143 (NCFEVLLYKKNRTPVWFYMQIAPIRNEHEKVVLFLCTFKDITLFKQPIEDDST). The chain crosses the membrane as a helical span at residues 218–238 (DWVILILTFYTAIMVPYNVSF). The Extracellular portion of the chain corresponds to 239–243 (KTKQN). The helical transmembrane segment at 244-264 (NIAWLVLDSVVDVIFLVDIVL) threads the bilayer. Residues 265 to 291 (NFHTTFVGPGGEVISDPKLIRMNYLKT) are Cytoplasmic-facing. Residues 292 to 312 (WFVIDLLSCLPYDIINAFENV) traverse the membrane as a helical segment. Residues 313-319 (DEGISSL) are Extracellular-facing. Residues 320–340 (FSSLKVVRLLRLGRVARKLDH) form a helical; Voltage-sensor membrane-spanning segment. Topologically, residues 341–346 (YLEYGA) are cytoplasmic. The chain crosses the membrane as a helical span at residues 347 to 367 (AVLVLLVCVFGLVAHWLACIW). Over 368 to 419 (YSIGDYEVIDEVTNTIQIDSWLYQLALSIGTPYRYNTSAGIWEGGPSKDSLY) the chain is Extracellular. Asn403 carries N-linked (GlcNAc...) asparagine glycosylation. An intramembrane region (pore-forming) is located at residues 420-440 (VSSLYFTMTSLTTIGFGNIAP). The short motif at 432–437 (TIGFGN) is the Selectivity filter element. At 441–446 (TTDVEK) the chain is on the extracellular side. Residues 447–467 (MFSVAMMMVGSLLYATIFGNV) form a helical membrane-spanning segment. The Cytoplasmic portion of the chain corresponds to 468–988 (TTIFQQMYAN…PESDKDEIHF (521 aa)). 550–667 (AFRLASDGCL…NSFSRNLTLT (118 aa)) contributes to the a nucleoside 3',5'-cyclic phosphate binding site. The interval 704-715 (HPVRKLFQKFKQ) is calmodulin-binding. The disordered stretch occupies residues 717-742 (KELRNQGSTQGDPERNQLQVESRSLQ). The segment covering 721-742 (NQGSTQGDPERNQLQVESRSLQ) has biased composition (polar residues). Residue Lys785 forms a Glycyl lysine isopeptide (Lys-Gly) (interchain with G-Cter in ubiquitin) linkage. Positions 838 to 890 (GLLSEDPKSSDSENSVTKNPLRKTDSCDSGITKSDLRLDKAGEARSPLEHSPI) are disordered. Residues 871–885 (SDLRLDKAGEARSPL) show a composition bias toward basic and acidic residues. The residue at position 883 (Ser883) is a Phosphoserine. The CAD (involved in subunit assembly) stretch occupies residues 909 to 948 (TLQEVKHELKEDIQLLSCRMTALEKQVAEILKILSEKSVP). The tract at residues 969–988 (DIFSVSRPESPESDKDEIHF) is disordered. Residues 977–988 (ESPESDKDEIHF) show a composition bias toward basic and acidic residues.

It belongs to the potassium channel family. H (Eag) (TC 1.A.1.20) subfamily. Kv10.2/KCNH5 sub-subfamily. Homotetramer. The potassium channel is probably composed of a homo- or heterotetrameric complex of pore-forming alpha subunits that can associate with modulating beta subunits. Heteromultimer with KCNH1/EAG. As to expression, detected in brain, skeletal muscle, heart, placenta, lung and liver, and at low levels in kidney.

It is found in the membrane. It catalyses the reaction K(+)(in) = K(+)(out). Functionally, pore-forming (alpha) subunit of a voltage-gated delayed rectifier potassium channel that mediates outward-rectifying potassium currents which, on depolarization, reaches a steady-state level and do not inactivate. The kinetic is characterized by a slow activation time course and a small voltage dependence of the activation time constants, therefore, starts to open at more negative voltages. The activation kinetics depend on the prepulse potential and external divalent cation concentration. The time course of activation is biphasic with a fast and a slowly activating current component. With negative prepulses, the current activation is delayed and slowed down several fold, whereas more positive prepulses speed up activation, therefore the activation rate depends on holding potential. The chain is Voltage-gated delayed rectifier potassium channel KCNH5 from Homo sapiens (Human).